The chain runs to 312 residues: Porphobilinogen deaminase (312 aa).

C241 bears the S-(dipyrrolylmethanemethyl)cysteine mark.

It belongs to the HMBS family. Monomer. The cofactor is dipyrromethane.

The catalysed reaction is 4 porphobilinogen + H2O = hydroxymethylbilane + 4 NH4(+). Its pathway is porphyrin-containing compound metabolism; protoporphyrin-IX biosynthesis; coproporphyrinogen-III from 5-aminolevulinate: step 2/4. In terms of biological role, tetrapolymerization of the monopyrrole PBG into the hydroxymethylbilane pre-uroporphyrinogen in several discrete steps. In Cytophaga hutchinsonii (strain ATCC 33406 / DSM 1761 / CIP 103989 / NBRC 15051 / NCIMB 9469 / D465), this protein is Porphobilinogen deaminase.